An 859-amino-acid chain; its full sequence is MRRWFKKTLPRPPDEEESAGLTNKDIVETNHLYPTITNLSLNSDTSSILFDKNKKPLKPKIIIPDKEFDLDYYLKDETESIQSPFEGFTAQPNFSNFNKQGNTMNREANFQRTNEKIQRNKSIKRVKLFHGNLILDCPIPKKLLVTLPQQTEREFAYMRYSAATCDPQDFSKSLFTLRQPLFFQPRKTEICIAITMYNEDEVLFARTMHSVMKNISHLCTRKNSQVWGKDAWKKVVVCIISDGRTKIHPRTLAYLAAIGVYQDGIAKNQVNDKEVKAHIYEYTTQLSIDPNLKFKGSDRGIVPVQMIFCLKEKNQKKLNSHLWFFQAFCPILKPEVCILLDAGTRPGDQSIYHLWKSFDLNPQVAGACGEIVVMKGKLGSGLINPLVATQNFEYKMSNILDKPVESVFGFISVLPGAFSAYRFEALQNDSQGNGPLASYFKGELQNTGKSGIFEANMYLAEDRILCFELVSKKNEAWILHYVKSAYADTDVPDRIPEFVLQRRRWLNGSFFAAAYAICHYYRFFRTSHTISRKFMLSIEFIYQLATIVFGWFNIGNFFIIFYILTSSLASTSANFLPGEILFRIAIWIYASLLVTCFVLALGNRPHGSPNFYLSMVIMYSILMGYLLFCSGWIAYRAISDAIHNASSTSSSYTSALLNSNVFINIVISLSSTYGMYLVVSIISFDPWHMFTSFVQYIFLSIMYTNVLNVYAFCNTHDVSWGTKGDHFTNNDLGVARLLQKGADVEIAIPTNQSDIDAKYEDAVKLLASPSLEFNSPIINHGEQEDFYKNFRTYVVLTWILSNLFLVGIVLSIPKINGISISNNETSAYLSFLLWSVVAFSVFRFIGCIFYLFIRLCTGE.

Residues 1-22 are disordered; it reads MRRWFKKTLPRPPDEEESAGLT. The next 5 membrane-spanning stretches (helical) occupy residues 544 to 564, 615 to 635, 662 to 682, 793 to 813, and 833 to 853; these read LATI…FYIL, MVIM…WIAY, FINI…VSII, YVVL…LSIP, and LWSV…YLFI.

It belongs to the chitin synthase family.

It is found in the cell membrane. It carries out the reaction [(1-&gt;4)-N-acetyl-beta-D-glucosaminyl](n) + UDP-N-acetyl-alpha-D-glucosamine = [(1-&gt;4)-N-acetyl-beta-D-glucosaminyl](n+1) + UDP + H(+). Polymerizes chitin, a structural polymer of the cell wall and septum, by transferring the sugar moiety of UDP-GlcNAc to the non-reducing end of the growing chitin polymer. The polypeptide is Chitin synthase 1 (chs1) (Schizosaccharomyces pombe (strain 972 / ATCC 24843) (Fission yeast)).